Here is a 100-residue protein sequence, read N- to C-terminus: MELLGEYVGQEGKPQKLRVSCEAPGDGDPFQGLLSGVAQMKDMVTELFDPLVQGEVQHRVAAAPDEDLDGDDEDDAEDENNIDNRTNFDGPSAKRPKTPS.

Met-1 is modified (N-acetylmethionine). The interval Ala-61 to Ser-100 is disordered. The segment covering Pro-64–Asn-81 has biased composition (acidic residues).

Component of the EKC/KEOPS complex composed of at least GON7, TP53RK, TPRKB, OSGEP and LAGE3; the whole complex dimerizes.

The protein resides in the nucleus. Component of the EKC/KEOPS complex that is required for the formation of a threonylcarbamoyl group on adenosine at position 37 (t(6)A37) in tRNAs that read codons beginning with adenine. The complex is probably involved in the transfer of the threonylcarbamoyl moiety of threonylcarbamoyl-AMP (TC-AMP) to the N6 group of A37. GON7 plays a supporting role to the catalytic subunit OSGEP in the complex. In Homo sapiens (Human), this protein is EKC/KEOPS complex subunit GON7.